A 458-amino-acid chain; its full sequence is tRNA-2-methylthio-N(6)-dimethylallyladenosine synthase (458 aa).

Residues 2-118 (PKLYIKTYGC…VFEHVDGILR (117 aa)) form the MTTase N-terminal domain. Residues Cys-11, Cys-47, Cys-81, Cys-170, Cys-174, and Cys-177 each contribute to the [4Fe-4S] cluster site. Residues 156-389 (PGVRSTAYVS…LAVVNEIAIR (234 aa)) enclose the Radical SAM core domain. The 64-residue stretch at 392–455 (RDLVGTVQEV…GFTLYGVPCP (64 aa)) folds into the TRAM domain.

It belongs to the methylthiotransferase family. MiaB subfamily. In terms of assembly, monomer. [4Fe-4S] cluster is required as a cofactor.

Its subcellular location is the cytoplasm. It carries out the reaction N(6)-dimethylallyladenosine(37) in tRNA + (sulfur carrier)-SH + AH2 + 2 S-adenosyl-L-methionine = 2-methylsulfanyl-N(6)-dimethylallyladenosine(37) in tRNA + (sulfur carrier)-H + 5'-deoxyadenosine + L-methionine + A + S-adenosyl-L-homocysteine + 2 H(+). Functionally, catalyzes the methylthiolation of N6-(dimethylallyl)adenosine (i(6)A), leading to the formation of 2-methylthio-N6-(dimethylallyl)adenosine (ms(2)i(6)A) at position 37 in tRNAs that read codons beginning with uridine. In Akkermansia muciniphila (strain ATCC BAA-835 / DSM 22959 / JCM 33894 / BCRC 81048 / CCUG 64013 / CIP 107961 / Muc), this protein is tRNA-2-methylthio-N(6)-dimethylallyladenosine synthase.